A 375-amino-acid polypeptide reads, in one-letter code: Probable cytochrome c oxidase subunit 2 (375 aa).

Helical transmembrane passes span 36-56 (LAVSLGITAMLVSGCSIDNVW), 80-100 (IIAALAMGVLVWGLTFWTVVF), and 122-142 (LTYTAIPFVIIAVLFYFTVVV). The Cu cation site is built by His-264, Cys-305, Cys-309, and His-313. Polar residues predominate over residues 353 to 363 (VATSTRPFNTD). Residues 353 to 375 (VATSTRPFNTDRTVKSAAAPEAE) form a disordered region.

This sequence belongs to the cytochrome c oxidase subunit 2 family. It depends on Cu cation as a cofactor. Heme is required as a cofactor.

The protein localises to the cell membrane. The catalysed reaction is 4 Fe(II)-[cytochrome c] + O2 + 8 H(+)(in) = 4 Fe(III)-[cytochrome c] + 2 H2O + 4 H(+)(out). Its function is as follows. Subunits I and II form the functional core of the enzyme complex. Electrons originating in cytochrome c are transferred via heme a and Cu(A) to the binuclear center formed by heme a3 and Cu(B). This chain is Probable cytochrome c oxidase subunit 2 (ctaC), found in Nocardia farcinica (strain IFM 10152).